The chain runs to 101 residues: Thiosulfate sulfurtransferase GlpE (101 aa).

Residues 17–101 (EAKSVQIVDI…GFSAWHEANA (85 aa)) form the Rhodanese domain. Catalysis depends on cysteine 65, which acts as the Cysteine persulfide intermediate.

Belongs to the GlpE family.

Its subcellular location is the cytoplasm. The catalysed reaction is thiosulfate + hydrogen cyanide = thiocyanate + sulfite + 2 H(+). It catalyses the reaction thiosulfate + [thioredoxin]-dithiol = [thioredoxin]-disulfide + hydrogen sulfide + sulfite + 2 H(+). Functionally, transferase that catalyzes the transfer of sulfur from thiosulfate to thiophilic acceptors such as cyanide or dithiols. May function in a CysM-independent thiosulfate assimilation pathway by catalyzing the conversion of thiosulfate to sulfite, which can then be used for L-cysteine biosynthesis. This is Thiosulfate sulfurtransferase GlpE from Shewanella oneidensis (strain ATCC 700550 / JCM 31522 / CIP 106686 / LMG 19005 / NCIMB 14063 / MR-1).